Consider the following 225-residue polypeptide: Ribulose-phosphate 3-epimerase (225 aa).

Serine 9 provides a ligand contact to substrate. The a divalent metal cation site is built by histidine 34, aspartate 36, and histidine 68. Aspartate 36 functions as the Proton acceptor in the catalytic mechanism. Substrate contacts are provided by residues histidine 68, 144 to 147 (GFGG), 177 to 179 (DGG), and 199 to 200 (GS). Aspartate 177 contacts a divalent metal cation. Aspartate 177 serves as the catalytic Proton donor.

The protein belongs to the ribulose-phosphate 3-epimerase family. A divalent metal cation is required as a cofactor.

The enzyme catalyses D-ribulose 5-phosphate = D-xylulose 5-phosphate. The protein operates within carbohydrate degradation. In terms of biological role, catalyzes the reversible epimerization of D-ribulose 5-phosphate to D-xylulose 5-phosphate. This is Ribulose-phosphate 3-epimerase from Escherichia coli O157:H7.